Here is a 183-residue protein sequence, read N- to C-terminus: 2-C-methyl-D-erythritol 2,4-cyclodiphosphate synthase (183 aa).

A divalent metal cation contacts are provided by Asp-8 and His-10. 4-CDP-2-C-methyl-D-erythritol 2-phosphate contacts are provided by residues 8–10 (DVH) and 34–35 (HS). His-42 provides a ligand contact to a divalent metal cation. Residues 56–58 (DIG), 61–65 (FPDTD), 132–135 (TTEE), and Phe-139 contribute to the 4-CDP-2-C-methyl-D-erythritol 2-phosphate site.

Belongs to the IspF family. In terms of assembly, homotrimer. A divalent metal cation is required as a cofactor.

The enzyme catalyses 4-CDP-2-C-methyl-D-erythritol 2-phosphate = 2-C-methyl-D-erythritol 2,4-cyclic diphosphate + CMP. It participates in isoprenoid biosynthesis; isopentenyl diphosphate biosynthesis via DXP pathway; isopentenyl diphosphate from 1-deoxy-D-xylulose 5-phosphate: step 4/6. Involved in the biosynthesis of isopentenyl diphosphate (IPP) and dimethylallyl diphosphate (DMAPP), two major building blocks of isoprenoid compounds. Catalyzes the conversion of 4-diphosphocytidyl-2-C-methyl-D-erythritol 2-phosphate (CDP-ME2P) to 2-C-methyl-D-erythritol 2,4-cyclodiphosphate (ME-CPP) with a corresponding release of cytidine 5-monophosphate (CMP). This chain is 2-C-methyl-D-erythritol 2,4-cyclodiphosphate synthase, found in Lachnospira eligens (strain ATCC 27750 / DSM 3376 / VPI C15-48 / C15-B4) (Eubacterium eligens).